A 255-amino-acid chain; its full sequence is F-box/SPRY domain-containing protein 1 (255 aa).

Residues 3-51 (DPVAALCNFNVLEVIFSYLDLNDLSRCSQVCRSWHHFLNDENSDVWRWH) enclose the F-box domain. The B30.2/SPRY domain occupies 61 to 253 (MKSDLLTSVS…VSMVYLGTPL (193 aa)).

It belongs to the FBXO45/Fsn family. Component of an E3 ubiquitin ligase complex composed of hiw and Fsn.

Its subcellular location is the synapse. The protein operates within protein modification; protein ubiquitination. Its function is as follows. Required in the presynaptic motoneuron to down-regulate the levels of wnd and restrain synaptic terminal growth at the neuromuscular junction (NMJ). This Drosophila willistoni (Fruit fly) protein is F-box/SPRY domain-containing protein 1.